The primary structure comprises 203 residues: Outer-membrane lipoprotein LolB (203 aa).

An N-terminal signal peptide occupies residues 1–21 (MTGRWSPRLLAGLLAALVLSG). The N-palmitoyl cysteine moiety is linked to residue cysteine 22. Cysteine 22 carries S-diacylglycerol cysteine lipidation.

The protein belongs to the LolB family. Monomer.

It localises to the cell outer membrane. Plays a critical role in the incorporation of lipoproteins in the outer membrane after they are released by the LolA protein. In Halorhodospira halophila (strain DSM 244 / SL1) (Ectothiorhodospira halophila (strain DSM 244 / SL1)), this protein is Outer-membrane lipoprotein LolB.